A 264-amino-acid chain; its full sequence is Ribosomal RNA small subunit methyltransferase A (264 aa).

Positions 12, 14, 39, 60, 83, and 103 each coordinate S-adenosyl-L-methionine.

Belongs to the class I-like SAM-binding methyltransferase superfamily. rRNA adenine N(6)-methyltransferase family. RsmA subfamily.

It is found in the cytoplasm. The enzyme catalyses adenosine(1518)/adenosine(1519) in 16S rRNA + 4 S-adenosyl-L-methionine = N(6)-dimethyladenosine(1518)/N(6)-dimethyladenosine(1519) in 16S rRNA + 4 S-adenosyl-L-homocysteine + 4 H(+). Its function is as follows. Specifically dimethylates two adjacent adenosines (A1518 and A1519) in the loop of a conserved hairpin near the 3'-end of 16S rRNA in the 30S particle. May play a critical role in biogenesis of 30S subunits. The chain is Ribosomal RNA small subunit methyltransferase A from Syntrophotalea carbinolica (strain DSM 2380 / NBRC 103641 / GraBd1) (Pelobacter carbinolicus).